The sequence spans 360 residues: DNA replication and repair protein RecF (360 aa).

30-37 (GHNGSGKT) contacts ATP.

This sequence belongs to the RecF family.

It is found in the cytoplasm. Functionally, the RecF protein is involved in DNA metabolism; it is required for DNA replication and normal SOS inducibility. RecF binds preferentially to single-stranded, linear DNA. It also seems to bind ATP. The sequence is that of DNA replication and repair protein RecF from Actinobacillus pleuropneumoniae serotype 5b (strain L20).